The sequence spans 427 residues: 3-phosphoshikimate 1-carboxyvinyltransferase (427 aa).

3-phosphoshikimate contacts are provided by K23, S24, and R28. K23 contacts phosphoenolpyruvate. Phosphoenolpyruvate-binding residues include G97 and R125. S170, S171, Q172, S198, D314, N337, and K341 together coordinate 3-phosphoshikimate. Q172 provides a ligand contact to phosphoenolpyruvate. Catalysis depends on D314, which acts as the Proton acceptor. R345, R387, and K412 together coordinate phosphoenolpyruvate.

Belongs to the EPSP synthase family. Monomer.

The protein localises to the cytoplasm. The catalysed reaction is 3-phosphoshikimate + phosphoenolpyruvate = 5-O-(1-carboxyvinyl)-3-phosphoshikimate + phosphate. It functions in the pathway metabolic intermediate biosynthesis; chorismate biosynthesis; chorismate from D-erythrose 4-phosphate and phosphoenolpyruvate: step 6/7. Its function is as follows. Catalyzes the transfer of the enolpyruvyl moiety of phosphoenolpyruvate (PEP) to the 5-hydroxyl of shikimate-3-phosphate (S3P) to produce enolpyruvyl shikimate-3-phosphate and inorganic phosphate. The polypeptide is 3-phosphoshikimate 1-carboxyvinyltransferase (Buchnera aphidicola subsp. Acyrthosiphon pisum (strain 5A)).